The following is a 206-amino-acid chain: Protein-methionine-sulfoxide reductase heme-binding subunit MsrQ (206 aa).

The next 6 membrane-spanning stretches (helical) occupy residues 14–34, 45–65, 82–102, 118–138, 149–169, and 179–199; these read IKPL…WLGA, FLTR…LAIT, MCGL…VWWD, PFIT…ATST, WQTL…HFWW, and QPLL…AAWW.

The protein belongs to the MsrQ family. As to quaternary structure, heterodimer of a catalytic subunit (MsrP) and a heme-binding subunit (MsrQ). The cofactor is FMN. It depends on heme b as a cofactor.

The protein localises to the cell inner membrane. Its function is as follows. Part of the MsrPQ system that repairs oxidized periplasmic proteins containing methionine sulfoxide residues (Met-O), using respiratory chain electrons. Thus protects these proteins from oxidative-stress damage caused by reactive species of oxygen and chlorine generated by the host defense mechanisms. MsrPQ is essential for the maintenance of envelope integrity under bleach stress, rescuing a wide series of structurally unrelated periplasmic proteins from methionine oxidation. MsrQ provides electrons for reduction to the reductase catalytic subunit MsrP, using the quinone pool of the respiratory chain. This chain is Protein-methionine-sulfoxide reductase heme-binding subunit MsrQ, found in Bordetella pertussis (strain Tohama I / ATCC BAA-589 / NCTC 13251).